A 270-amino-acid polypeptide reads, in one-letter code: Orotidine 5'-phosphate decarboxylase (270 aa).

The active-site Proton donor is lysine 95.

It belongs to the OMP decarboxylase family. Type 2 subfamily.

The enzyme catalyses orotidine 5'-phosphate + H(+) = UMP + CO2. It participates in pyrimidine metabolism; UMP biosynthesis via de novo pathway; UMP from orotate: step 2/2. The protein is Orotidine 5'-phosphate decarboxylase of Azoarcus sp. (strain BH72).